Consider the following 498-residue polypeptide: Cytochrome P450 monooxygenase astB (498 aa).

Residues 7-27 (FTTMPVVLLVGLVLYQLLAFT) traverse the membrane as a helical segment. 3 N-linked (GlcNAc...) asparagine glycosylation sites follow: Asn237, Asn248, and Asn346. Cys425 contributes to the heme binding site.

The protein belongs to the cytochrome P450 family. Heme is required as a cofactor.

Its subcellular location is the membrane. It carries out the reaction preasperterpenoid A + 4 reduced [NADPH--hemoprotein reductase] + 4 O2 = asperterpenoid A + 4 oxidized [NADPH--hemoprotein reductase] + 5 H2O + 5 H(+). The catalysed reaction is asperterpenoid A + 2 reduced [NADPH--hemoprotein reductase] + 2 O2 = asperterpenoid B + 2 oxidized [NADPH--hemoprotein reductase] + 3 H2O + 3 H(+). It functions in the pathway secondary metabolite biosynthesis; terpenoid biosynthesis. In terms of biological role, cytochrome P450 monooxygenase; part of the gene cluster that mediates the biosynthesis of the asperterpenoids, sesterterpenes that exhibit anti-tuberculosis activity. The first step of the pathway is performed by the sesterterpene synthase astC that possesses both prenyl transferase and terpene cyclase activity, converting isopentenyl diphosphate and dimethylallyl diphosphate into geranylfarnesyl diphosphate (GFPP) and further converting GFPP into preasperterpenoid A, respectively. The cytochrome P450 monooxygenase astB then dually oxidizes preasperterpenoid A to produce asperterpenoid A along with a minor product, asperterpenoid B. Finally, the cytochrome P450 monooxygenase astA converts asperterpenoid A into asperterpenoid C. This Talaromyces wortmannii (Penicillium wortmannii) protein is Cytochrome P450 monooxygenase astB.